The chain runs to 280 residues: Eukaryotic translation initiation factor 3 subunit F-1 (280 aa).

Positions valine 8–glycine 138 constitute an MPN domain.

This sequence belongs to the eIF-3 subunit F family. Component of the eukaryotic translation initiation factor 3 (eIF-3) complex. The eIF-3 complex interacts with pix.

Its subcellular location is the cytoplasm. Its function is as follows. Component of the eukaryotic translation initiation factor 3 (eIF-3) complex, which is involved in protein synthesis of a specialized repertoire of mRNAs and, together with other initiation factors, stimulates binding of mRNA and methionyl-tRNAi to the 40S ribosome. The eIF-3 complex specifically targets and initiates translation of a subset of mRNAs involved in cell proliferation. The sequence is that of Eukaryotic translation initiation factor 3 subunit F-1 from Drosophila willistoni (Fruit fly).